A 195-amino-acid polypeptide reads, in one-letter code: Interferon tau-9 (195 aa).

The first 23 residues, 1-23 (MAFVLSLLMALVLVSYGPGGSLG), serve as a signal peptide directing secretion. Intrachain disulfides connect Cys24-Cys122 and Cys52-Cys162.

Belongs to the alpha/beta interferon family. IFN-alphaII subfamily. In terms of tissue distribution, constitutively and exclusively expressed in the mononuclear cells of the extraembryonic trophectoderm.

It is found in the secreted. Functionally, paracrine hormone primarily responsible for maternal recognition of pregnancy. Interacts with endometrial receptors, probably type I interferon receptors, and blocks estrogen receptor expression, preventing the estrogen-induced increase in oxytocin receptor expression in the endometrium. This results in the suppression of the pulsatile endometrial release of the luteolytic hormone prostaglandin F2-alpha, hindering the regression of the corpus luteum (luteolysis) and therefore a return to ovarian cyclicity. This, and a possible direct effect of IFN-tau on prostaglandin synthesis, leads in turn to continued ovarian progesterone secretion, which stimulates the secretion by the endometrium of the nutrients required for the growth of the conceptus. In summary, displays particularly high antiviral and antiproliferative potency concurrently with particular weak cytotoxicity, high antiluteolytic activity and immunomodulatory properties. In contrast with other IFNs, IFN-tau is not virally inducible. The sequence is that of Interferon tau-9 (IFNT9) from Ovis aries (Sheep).